The following is a 784-amino-acid chain: LPS-assembly protein LptD (784 aa).

The first 24 residues, 1–24, serve as a signal peptide directing secretion; that stretch reads MKKRIPTLLATMIATALYSQQGLA. Intrachain disulfides connect cysteine 31-cysteine 724 and cysteine 173-cysteine 725.

The protein belongs to the LptD family. In terms of assembly, component of the lipopolysaccharide transport and assembly complex. Interacts with LptE and LptA. Post-translationally, contains two intramolecular disulfide bonds.

The protein localises to the cell outer membrane. Functionally, together with LptE, is involved in the assembly of lipopolysaccharide (LPS) at the surface of the outer membrane. This chain is LPS-assembly protein LptD, found in Shigella dysenteriae serotype 1 (strain Sd197).